The chain runs to 215 residues: Adenylate kinase (215 aa).

10-15 lines the ATP pocket; the sequence is GAGKGT. The tract at residues 30 to 59 is NMP; it reads STGDIFRANISGKTELGMKAKGYMDKGLLV. Residues T31, R36, 57-59, 85-88, and Q92 each bind AMP; these read LLV and GFPR. The interval 126–163 is LID; the sequence is GRRVCSKCGASYHIEYNPTKVEGICDLCGSPVVQRKDD. R127 contributes to the ATP binding site. Zn(2+) is bound by residues C130 and C133. ATP is bound at residue 136–137; that stretch reads SY. Residues C150 and C153 each coordinate Zn(2+). AMP contacts are provided by R160 and R171. Residue Q199 participates in ATP binding.

This sequence belongs to the adenylate kinase family. As to quaternary structure, monomer.

It is found in the cytoplasm. The catalysed reaction is AMP + ATP = 2 ADP. The protein operates within purine metabolism; AMP biosynthesis via salvage pathway; AMP from ADP: step 1/1. Its function is as follows. Catalyzes the reversible transfer of the terminal phosphate group between ATP and AMP. Plays an important role in cellular energy homeostasis and in adenine nucleotide metabolism. This Clostridium acetobutylicum (strain ATCC 824 / DSM 792 / JCM 1419 / IAM 19013 / LMG 5710 / NBRC 13948 / NRRL B-527 / VKM B-1787 / 2291 / W) protein is Adenylate kinase.